Consider the following 402-residue polypeptide: Argininosuccinate synthase (402 aa).

8–16 (AYSGGLDTS) lines the ATP pocket. L-citrulline is bound by residues Tyr86 and Ser91. Position 116 (Gly116) interacts with ATP. Thr118, Asn122, and Asp123 together coordinate L-aspartate. L-citrulline is bound at residue Asn122. 5 residues coordinate L-citrulline: Arg126, Ser175, Ser184, Glu260, and Tyr272.

It belongs to the argininosuccinate synthase family. Type 1 subfamily. In terms of assembly, homotetramer.

Its subcellular location is the cytoplasm. It carries out the reaction L-citrulline + L-aspartate + ATP = 2-(N(omega)-L-arginino)succinate + AMP + diphosphate + H(+). It participates in amino-acid biosynthesis; L-arginine biosynthesis; L-arginine from L-ornithine and carbamoyl phosphate: step 2/3. The polypeptide is Argininosuccinate synthase (Clostridium novyi (strain NT)).